The primary structure comprises 102 residues: Putative septation protein SpoVG (102 aa).

Residues 83–102 (TDEVIPDKNATSDNEESDEA) are disordered.

Belongs to the SpoVG family.

Functionally, could be involved in septation. This is Putative septation protein SpoVG from Staphylococcus epidermidis (strain ATCC 35984 / DSM 28319 / BCRC 17069 / CCUG 31568 / BM 3577 / RP62A).